Reading from the N-terminus, the 354-residue chain is Holliday junction branch migration complex subunit RuvB (354 aa).

The tract at residues Thr4–Tyr190 is large ATPase domain (RuvB-L). Residues Leu29, Arg30, Gly71, Lys74, Thr75, Thr76, Glu137–Tyr139, Arg180, Tyr190, and Arg227 each bind ATP. Mg(2+) is bound at residue Thr75. The interval Asn191 to Asp261 is small ATPAse domain (RuvB-S). Residues Ala264–Thr354 are head domain (RuvB-H). DNA contacts are provided by Arg300, Arg319, and Arg324.

The protein belongs to the RuvB family. In terms of assembly, homohexamer. Forms an RuvA(8)-RuvB(12)-Holliday junction (HJ) complex. HJ DNA is sandwiched between 2 RuvA tetramers; dsDNA enters through RuvA and exits via RuvB. An RuvB hexamer assembles on each DNA strand where it exits the tetramer. Each RuvB hexamer is contacted by two RuvA subunits (via domain III) on 2 adjacent RuvB subunits; this complex drives branch migration. In the full resolvosome a probable DNA-RuvA(4)-RuvB(12)-RuvC(2) complex forms which resolves the HJ.

The protein resides in the cytoplasm. The catalysed reaction is ATP + H2O = ADP + phosphate + H(+). Functionally, the RuvA-RuvB-RuvC complex processes Holliday junction (HJ) DNA during genetic recombination and DNA repair, while the RuvA-RuvB complex plays an important role in the rescue of blocked DNA replication forks via replication fork reversal (RFR). RuvA specifically binds to HJ cruciform DNA, conferring on it an open structure. The RuvB hexamer acts as an ATP-dependent pump, pulling dsDNA into and through the RuvAB complex. RuvB forms 2 homohexamers on either side of HJ DNA bound by 1 or 2 RuvA tetramers; 4 subunits per hexamer contact DNA at a time. Coordinated motions by a converter formed by DNA-disengaged RuvB subunits stimulates ATP hydrolysis and nucleotide exchange. Immobilization of the converter enables RuvB to convert the ATP-contained energy into a lever motion, pulling 2 nucleotides of DNA out of the RuvA tetramer per ATP hydrolyzed, thus driving DNA branch migration. The RuvB motors rotate together with the DNA substrate, which together with the progressing nucleotide cycle form the mechanistic basis for DNA recombination by continuous HJ branch migration. Branch migration allows RuvC to scan DNA until it finds its consensus sequence, where it cleaves and resolves cruciform DNA. This Paraburkholderia phytofirmans (strain DSM 17436 / LMG 22146 / PsJN) (Burkholderia phytofirmans) protein is Holliday junction branch migration complex subunit RuvB.